Reading from the N-terminus, the 1143-residue chain is DNA-directed RNA polymerase subunit beta (1143 aa).

Belongs to the RNA polymerase beta chain family. In plastids the minimal PEP RNA polymerase catalytic core is composed of four subunits: alpha, beta, beta', and beta''. When a (nuclear-encoded) sigma factor is associated with the core the holoenzyme is formed, which can initiate transcription.

The protein resides in the plastid. The protein localises to the chloroplast. It catalyses the reaction RNA(n) + a ribonucleoside 5'-triphosphate = RNA(n+1) + diphosphate. DNA-dependent RNA polymerase catalyzes the transcription of DNA into RNA using the four ribonucleoside triphosphates as substrates. The sequence is that of DNA-directed RNA polymerase subunit beta from Pyropia yezoensis (Susabi-nori).